Reading from the N-terminus, the 212-residue chain is Regulatory protein RecX (212 aa).

It belongs to the RecX family.

It localises to the cytoplasm. Functionally, modulates RecA activity. The protein is Regulatory protein RecX of Clostridioides difficile (strain 630) (Peptoclostridium difficile).